We begin with the raw amino-acid sequence, 780 residues long: Cation channel sperm-associated protein 1 (780 aa).

Disordered regions lie at residues 1–37, 71–306, and 376–412; these read MDQNSVPEKAQNEADTNNADRFFRSHSSPPHHRPGHS, LSSH…QDHH, and QMSKKVHTQDISTKHSEDWGKEEGQFQKRKTGRLQRT. Residues 1–447 lie on the Cytoplasmic side of the membrane; the sequence is MDQNSVPEKA…EMIRNLTQSL (447 aa). The segment covering 110–122 has biased composition (basic and acidic residues); the sequence is SYGEDYHDELQRD. Positions 211–241 are enriched in basic residues; sequence QVPHRGWPHHHQVHHHGRSRHHEAHQHGKSP. The segment covering 261 to 284 has biased composition (basic and acidic residues); that stretch reads SDYHSEYHQGDHHPSEYHHGDHPH. A compositionally biased stretch (basic residues) spans 285–299; that stretch reads HTQHHYHQTHRHRDY. Residues 387 to 401 are compositionally biased toward basic and acidic residues; that stretch reads STKHSEDWGKEEGQF. Residues 402–412 show a composition bias toward basic residues; the sequence is QKRKTGRLQRT. A helical transmembrane segment spans residues 448 to 469; that stretch reads AFETFIFFVVCLNTVMLVAQTF. The Extracellular segment spans residues 470-478; that stretch reads AEVEIRGEW. Residues 479–500 form a helical membrane-spanning segment; that stretch reads YFMALDSIFFCIYVVEALLKII. Residues 501 to 508 are Cytoplasmic-facing; it reads ALGLSYFF. Residues 509-531 traverse the membrane as a helical segment; that stretch reads DFWNNLDFFIMAMAVLDFLLMQT. Residues 532-540 are Extracellular-facing; the sequence is HSFAIYHQS. Residues 541–563 form a helical membrane-spanning segment; it reads LFRILKVFKSLRALRAIRVLRRL. At 564–581 the chain is on the cytoplasmic side; sequence SFLTSVQEVTGTLGQSLP. The chain crosses the membrane as a helical span at residues 582-604; the sequence is SIAAILILMFTCLFLFSAVLRAL. Residues 605–615 are Extracellular-facing; sequence FRKSDPKRFQN. Positions 616–628 form an intramembrane region, helical; Pore-forming; that stretch reads IFTTIFTLFTLLT. At 629–645 the chain is on the extracellular side; sequence LDDWSLIYMDSRAQGAW. The chain crosses the membrane as a helical span at residues 646 to 671; the sequence is YIIPILVIYIIIQYFIFLNLVITVLV. Residues 672–780 lie on the Cytoplasmic side of the membrane; it reads DSFQTALFKG…FEAGEEDFRN (109 aa).

The protein belongs to the cation channel sperm-associated (TC 1.A.1.19) family. Component of the CatSper complex or CatSpermasome composed of the core pore-forming members CATSPER1, CATSPER2, CATSPER3 and CATSPER4 as well as auxiliary members CATSPERB, CATSPERG, CATSPERD, CATSPERE, CATSPERZ, C2CD6/CATSPERT, TMEM249, TMEM262 and EFCAB9. HSPA1 may be an additional auxiliary complex member. The core complex members CATSPER1, CATSPER2, CATSPER3 and CATSPER4 form a heterotetrameric channel. The auxiliary CATSPERB, CATSPERG, CATSPERD and CATSPERE subunits form a pavilion-like structure over the pore which stabilizes the complex through interactions with CATSPER4, CATSPER3, CATSPER1 and CATSPER2 respectively. TMEM262/CATSPERH interacts with CATSPERB, further stabilizing the complex. C2CD6/CATSPERT interacts at least with CATSPERD and is required for targeting the CatSper complex in the flagellar membrane. Interacts with Ca(v)3.3/CACNA1I, leading to suppression of T-type calcium channel activity. In terms of tissue distribution, testis-specific.

Its subcellular location is the cell projection. The protein resides in the cilium. It localises to the flagellum membrane. The catalysed reaction is Ca(2+)(in) = Ca(2+)(out). Its activity is regulated as follows. The CatSper calcium channel is indirectly activated by extracellular progesterone and prostaglandins following the sequence: progesterone &gt; PGF1-alpha = PGE1 &gt; PGA1 &gt; PGE2 &gt;&gt; PGD2. The CatSper calcium channel is directly inhibited by endocannabinoid 2-arachidonoylglycerol (2AG). Indirect activation by progesterone takes place via the following mechanism: progesterone binds and activates the acylglycerol lipase ABHD2, which in turn mediates hydrolysis of 2AG inhibitor, relieving inhibition of the CatSper channel. The primary effect of progesterone activation is to shift voltage dependence towards more physiological, negative membrane potentials; it is not mediated by metabotropic receptors and second messengers. Sperm capacitation enhances the effect of progesterone by providing additional negative shift. Also activated by the elevation of intracellular pH. Its function is as follows. Pore-forming subunit of the CatSper complex, a sperm-specific voltage-gated calcium channel that plays a central role in calcium-dependent physiological responses essential for successful fertilization, such as sperm hyperactivation, acrosome reaction and chemotaxis towards the oocyte. This chain is Cation channel sperm-associated protein 1 (CATSPER1), found in Homo sapiens (Human).